A 107-amino-acid chain; its full sequence is Toxin MT2730 (107 aa).

Positions 1-42 (MTHKRTKRQPAIAAGLNAPRRNRVGRQHGWPADVPSAEQRRA) are disordered.

Its function is as follows. Toxic component of a type II toxin-antitoxin (TA) system. Its toxic effect is neutralized by coexpression with cognate antitoxin MT2731. This chain is Toxin MT2730, found in Mycobacterium tuberculosis (strain CDC 1551 / Oshkosh).